The primary structure comprises 323 residues: GMP reductase (323 aa).

Catalysis depends on cysteine 174, which acts as the Thioimidate intermediate. 203 to 226 (IIADGGIRHNGDIAKSVRFGASMV) provides a ligand contact to NADP(+).

Belongs to the IMPDH/GMPR family. GuaC type 2 subfamily.

It catalyses the reaction IMP + NH4(+) + NADP(+) = GMP + NADPH + 2 H(+). In terms of biological role, catalyzes the irreversible NADPH-dependent deamination of GMP to IMP. It functions in the conversion of nucleobase, nucleoside and nucleotide derivatives of G to A nucleotides, and in maintaining the intracellular balance of A and G nucleotides. In Oenococcus oeni (strain ATCC BAA-331 / PSU-1), this protein is GMP reductase.